The primary structure comprises 366 residues: NADH-quinone oxidoreductase subunit D (366 aa).

It belongs to the complex I 49 kDa subunit family. In terms of assembly, NDH-1 is composed of 14 different subunits. Subunits NuoB, C, D, E, F, and G constitute the peripheral sector of the complex.

It localises to the cell membrane. The catalysed reaction is a quinone + NADH + 5 H(+)(in) = a quinol + NAD(+) + 4 H(+)(out). Its function is as follows. NDH-1 shuttles electrons from NADH, via FMN and iron-sulfur (Fe-S) centers, to quinones in the respiratory chain. The immediate electron acceptor for the enzyme in this species is believed to be a menaquinone. Couples the redox reaction to proton translocation (for every two electrons transferred, four hydrogen ions are translocated across the cytoplasmic membrane), and thus conserves the redox energy in a proton gradient. This Bacillus thuringiensis subsp. konkukian (strain 97-27) protein is NADH-quinone oxidoreductase subunit D.